We begin with the raw amino-acid sequence, 957 residues long: SH3 domain-binding protein 4 (957 aa).

The 60-residue stretch at 54-113 (DNVKEVVAIKDYCPNNFTTLKFSKGEHLYVLDTSGGEWWYAHNTTEMGYIPSSYVQPLNY) folds into the SH3 1 domain. Residues 312-449 (TSIVCRLDSS…LEPVMYVVMV (138 aa)) form the ZU5 domain. The region spanning 649-719 (TSLKYGKLLK…HAKNVLVVGK (71 aa)) is the SH3 2 domain.

As to quaternary structure, homodimer or homooligomer.

The protein localises to the membrane. Its subcellular location is the clathrin-coated pit. It localises to the cytoplasmic vesicle. The protein resides in the clathrin-coated vesicle. It is found in the nucleus. Its function is as follows. Possible role in regulating endocytosis of the transferrin receptor at the plasma membrane. Alternatively, may function as a negative regulator of the amino acid-induced TOR signaling by inhibiting the formation of active Rag GTPase complexes. Preferentially binds inactive Rag GTPase complexes and prevents their interaction with the mTORC1 complex inhibiting its relocalization to lysosomes and its activation. Thereby, may indirectly regulate cell growth, proliferation and autophagy. In Xenopus tropicalis (Western clawed frog), this protein is SH3 domain-binding protein 4 (sh3bp4).